The chain runs to 74 residues: Protein DELETION OF SUV3 SUPPRESSOR 1(I) (74 aa).

The disordered stretch occupies residues glutamate 35 to lysine 74. Residues tryptophan 46–aspartate 57 show a composition bias toward acidic residues. Residues aspartate 58–lysine 74 show a composition bias toward basic and acidic residues.

This sequence belongs to the DSS1/SEM1 family. Part of the 26S proteasome. Interacts with BRCA2A and BRCA2B. Interacts with UCH1 and UCH2. Can form a tripartite complex with both RAD51 and BRCA2B or both DMC1 and BRCA2B.

Subunit of the 26S proteasome which plays a role in ubiquitin-dependent proteolysis. The sequence is that of Protein DELETION OF SUV3 SUPPRESSOR 1(I) from Arabidopsis thaliana (Mouse-ear cress).